The primary structure comprises 264 residues: Thymidylate synthase (264 aa).

Arg-21 provides a ligand contact to dUMP. (6R)-5,10-methylene-5,6,7,8-tetrahydrofolate is bound at residue His-51. DUMP is bound at residue 126-127; sequence RR. Cys-146 functions as the Nucleophile in the catalytic mechanism. Residues 166 to 169, Asn-177, and 207 to 209 contribute to the dUMP site; these read RSAD and HLY. Residue Asp-169 participates in (6R)-5,10-methylene-5,6,7,8-tetrahydrofolate binding. Ala-263 is a binding site for (6R)-5,10-methylene-5,6,7,8-tetrahydrofolate.

It belongs to the thymidylate synthase family. Bacterial-type ThyA subfamily. In terms of assembly, homodimer.

The protein resides in the cytoplasm. The enzyme catalyses dUMP + (6R)-5,10-methylene-5,6,7,8-tetrahydrofolate = 7,8-dihydrofolate + dTMP. Its pathway is pyrimidine metabolism; dTTP biosynthesis. Functionally, catalyzes the reductive methylation of 2'-deoxyuridine-5'-monophosphate (dUMP) to 2'-deoxythymidine-5'-monophosphate (dTMP) while utilizing 5,10-methylenetetrahydrofolate (mTHF) as the methyl donor and reductant in the reaction, yielding dihydrofolate (DHF) as a by-product. This enzymatic reaction provides an intracellular de novo source of dTMP, an essential precursor for DNA biosynthesis. The chain is Thymidylate synthase from Legionella pneumophila (strain Lens).